We begin with the raw amino-acid sequence, 226 residues long: Lipoprotein-releasing system ATP-binding protein LolD (226 aa).

The ABC transporter domain maps to 6-226 (VLISGLTKTF…KLYKGNLEEV (221 aa)). An ATP-binding site is contributed by 42–49 (GESGSGKS).

This sequence belongs to the ABC transporter superfamily. Lipoprotein translocase (TC 3.A.1.125) family. The complex is composed of two ATP-binding proteins (LolD) and two transmembrane proteins (LolC and LolE).

It localises to the cell inner membrane. In terms of biological role, part of the ABC transporter complex LolCDE involved in the translocation of mature outer membrane-directed lipoproteins, from the inner membrane to the periplasmic chaperone, LolA. Responsible for the formation of the LolA-lipoprotein complex in an ATP-dependent manner. The polypeptide is Lipoprotein-releasing system ATP-binding protein LolD (Treponema denticola (strain ATCC 35405 / DSM 14222 / CIP 103919 / JCM 8153 / KCTC 15104)).